We begin with the raw amino-acid sequence, 320 residues long: GTP 3',8-cyclase (320 aa).

The 218-residue stretch at 5–222 (KLSRPLKVLR…LMKKEFTFYP (218 aa)) folds into the Radical SAM core domain. Arginine 14 lines the GTP pocket. Cysteine 21, cysteine 25, and cysteine 28 together coordinate [4Fe-4S] cluster. Arginine 65 contributes to the GTP binding site. Position 69 (glycine 69) interacts with S-adenosyl-L-methionine. Threonine 96 is a GTP binding site. S-adenosyl-L-methionine is bound at residue serine 120. GTP is bound at residue lysine 157. S-adenosyl-L-methionine is bound at residue methionine 191. Residues cysteine 253 and cysteine 256 each coordinate [4Fe-4S] cluster. 258–260 (RIR) serves as a coordination point for GTP. Cysteine 270 provides a ligand contact to [4Fe-4S] cluster.

It belongs to the radical SAM superfamily. MoaA family. As to quaternary structure, monomer and homodimer. Requires [4Fe-4S] cluster as cofactor.

The catalysed reaction is GTP + AH2 + S-adenosyl-L-methionine = (8S)-3',8-cyclo-7,8-dihydroguanosine 5'-triphosphate + 5'-deoxyadenosine + L-methionine + A + H(+). It functions in the pathway cofactor biosynthesis; molybdopterin biosynthesis. Functionally, catalyzes the cyclization of GTP to (8S)-3',8-cyclo-7,8-dihydroguanosine 5'-triphosphate. The polypeptide is GTP 3',8-cyclase (Aquifex aeolicus (strain VF5)).